A 6077-amino-acid chain; its full sequence is Nonribosomal peptide synthetase nlsA (6077 aa).

Residues valine 417 to leucine 618 are adenylation 1. A Carrier 1 domain is found at histidine 751–lysine 827. An O-(pantetheine 4'-phosphoryl)serine modification is found at serine 788. 2 condensation regions span residues leucine 842–leucine 1267 and glutamate 1309–isoleucine 1737. Adenylation regions lie at residues glutamine 1757–glutamate 2149 and aspartate 2755–leucine 3157. Residues alanine 3297–glutamate 3373 form the Carrier 2 domain. Serine 3334 bears the O-(pantetheine 4'-phosphoryl)serine mark. The segment at aspartate 3524 to methionine 3779 is condensation 3. Residues glutamate 3816–leucine 4213 are adenylation 4. Positions arginine 4361–proline 4437 constitute a Carrier 3 domain. Position 4398 is an O-(pantetheine 4'-phosphoryl)serine (serine 4398). 2 condensation regions span residues proline 4451–glutamate 4869 and valine 4916–threonine 5260. In terms of domain architecture, Carrier 4 spans arginine 5334–lysine 5410. O-(pantetheine 4'-phosphoryl)serine is present on serine 5371. Residues aspartate 5476–leucine 5885 are condensation 6. Residues serine 5921–methionine 6004 form the Carrier 5 domain. Low complexity predominate over residues aspartate 6013 to alanine 6027. A disordered region spans residues aspartate 6013–alanine 6047. Polar residues predominate over residues arginine 6031–glutamate 6041.

This sequence belongs to the NRP synthetase family.

It participates in secondary metabolite biosynthesis. Functionally, nonribosomal peptide synthetase involved in the synthesis of nidulanin A and derived compounds. Nidulanin A is a tetracyclopeptide with the sequence L-Phe-L-Kyn-L-Val-D-Val and an isoprene unit N-linked to the amino group of L-kynurenine. The NRPS nlsA is responsible of the synthesis of the cyclopeptide and the prenyltransferase nptA adds the isoprene unit on the L-kynurenine residue of nidulanin A. Further modifications lead to additional oxygenated related compounds. This is Nonribosomal peptide synthetase nlsA from Emericella nidulans (strain FGSC A4 / ATCC 38163 / CBS 112.46 / NRRL 194 / M139) (Aspergillus nidulans).